Consider the following 155-residue polypeptide: Transcriptional repressor NrdR (155 aa).

A compositionally biased stretch (polar residues) spans 1–11 (MECPNCHQNAS). Residues 1 to 22 (MECPNCHQNASRVIDSRPSDEN) form a disordered region. A zinc finger spans residues 3–34 (CPNCHQNASRVIDSRPSDENRAIRRRRECENC). The ATP-cone domain maps to 49 to 139 (LLVVKNDGTR…IYREFKDMSS (91 aa)).

It belongs to the NrdR family. It depends on Zn(2+) as a cofactor.

In terms of biological role, negatively regulates transcription of bacterial ribonucleotide reductase nrd genes and operons by binding to NrdR-boxes. This Lactobacillus acidophilus (strain ATCC 700396 / NCK56 / N2 / NCFM) protein is Transcriptional repressor NrdR.